Reading from the N-terminus, the 968-residue chain is Translation initiation factor IF-2 (968 aa).

Over residues 305–319 (KPAAAAGAPGAPGAA) the composition is skewed to low complexity. Residues 305 to 376 (KPAAAAGAPG…NDRDARPEST (72 aa)) are disordered. One can recognise a tr-type G domain in the interval 468-635 (PRAPVVTVMG…QVLLQAEVLE (168 aa)). The interval 477–484 (GHVDHGKT) is G1. A GTP-binding site is contributed by 477–484 (GHVDHGKT). Residues 502 to 506 (GITQH) form a G2 region. The interval 523–526 (DTPG) is G3. Residues 523 to 527 (DTPGH) and 577 to 580 (NKID) contribute to the GTP site. The tract at residues 577-580 (NKID) is G4. Residues 613–615 (SAR) form a G5 region.

It belongs to the TRAFAC class translation factor GTPase superfamily. Classic translation factor GTPase family. IF-2 subfamily.

Its subcellular location is the cytoplasm. One of the essential components for the initiation of protein synthesis. Protects formylmethionyl-tRNA from spontaneous hydrolysis and promotes its binding to the 30S ribosomal subunits. Also involved in the hydrolysis of GTP during the formation of the 70S ribosomal complex. This Polaromonas sp. (strain JS666 / ATCC BAA-500) protein is Translation initiation factor IF-2.